The sequence spans 175 residues: Bifunctional protein PyrR (175 aa).

A PRPP-binding motif is present at residues 98–110 (VIIIDDVLYTGRT).

This sequence belongs to the purine/pyrimidine phosphoribosyltransferase family. PyrR subfamily. Homodimer and homohexamer; in equilibrium.

It catalyses the reaction UMP + diphosphate = 5-phospho-alpha-D-ribose 1-diphosphate + uracil. In terms of biological role, regulates transcriptional attenuation of the pyrimidine nucleotide (pyr) operon by binding in a uridine-dependent manner to specific sites on pyr mRNA. This disrupts an antiterminator hairpin in the RNA and favors formation of a downstream transcription terminator, leading to a reduced expression of downstream genes. Its function is as follows. Also displays a weak uracil phosphoribosyltransferase activity which is not physiologically significant. The chain is Bifunctional protein PyrR from Staphylococcus aureus (strain bovine RF122 / ET3-1).